Here is a 319-residue protein sequence, read N- to C-terminus: GTP 3',8-cyclase (319 aa).

The Radical SAM core domain maps to 4 to 219 (KHGRKINYLR…SKHSDLIPVE (216 aa)). Arg13 is a GTP binding site. Residues Cys20 and Cys24 each coordinate [4Fe-4S] cluster. S-adenosyl-L-methionine is bound at residue Tyr26. Cys27 serves as a coordination point for [4Fe-4S] cluster. Residue Arg63 participates in GTP binding. Residue Gly67 coordinates S-adenosyl-L-methionine. Thr94 is a binding site for GTP. Ser118 serves as a coordination point for S-adenosyl-L-methionine. Lys155 lines the GTP pocket. Met189 is a binding site for S-adenosyl-L-methionine. [4Fe-4S] cluster-binding residues include Cys249 and Cys252. 254–256 (RVR) serves as a coordination point for GTP. Cys266 contacts [4Fe-4S] cluster.

The protein belongs to the radical SAM superfamily. MoaA family. As to quaternary structure, monomer and homodimer. [4Fe-4S] cluster is required as a cofactor.

It catalyses the reaction GTP + AH2 + S-adenosyl-L-methionine = (8S)-3',8-cyclo-7,8-dihydroguanosine 5'-triphosphate + 5'-deoxyadenosine + L-methionine + A + H(+). Its pathway is cofactor biosynthesis; molybdopterin biosynthesis. Functionally, catalyzes the cyclization of GTP to (8S)-3',8-cyclo-7,8-dihydroguanosine 5'-triphosphate. This Clostridium botulinum (strain Okra / Type B1) protein is GTP 3',8-cyclase.